The sequence spans 228 residues: MYLLIPAAGVGKRMGCDRNKLLLEVRSQPIIAWTLLAAQAASEISWIGIISQPTDWPDFKSILANLQLTKPVEFILGGSTRQESVYNGLQALPTAAEQVLIHDGARCLATPNLLNSCAQAIRHCSGLIAAVPVKDTIKVVDEDGIIQNTPDRRNLWAAQTPQGFNVELLKQCHAEGVRQGWEVTDDAALFEKCGIEVQIVEGEETNLKVTTPQDLAIAEFILNSRDNS.

This sequence belongs to the IspD/TarI cytidylyltransferase family. IspD subfamily.

The enzyme catalyses 2-C-methyl-D-erythritol 4-phosphate + CTP + H(+) = 4-CDP-2-C-methyl-D-erythritol + diphosphate. It participates in isoprenoid biosynthesis; isopentenyl diphosphate biosynthesis via DXP pathway; isopentenyl diphosphate from 1-deoxy-D-xylulose 5-phosphate: step 2/6. Functionally, catalyzes the formation of 4-diphosphocytidyl-2-C-methyl-D-erythritol from CTP and 2-C-methyl-D-erythritol 4-phosphate (MEP). The chain is 2-C-methyl-D-erythritol 4-phosphate cytidylyltransferase from Nostoc sp. (strain PCC 7120 / SAG 25.82 / UTEX 2576).